A 268-amino-acid chain; its full sequence is Phosphatidylglycerol--prolipoprotein diacylglyceryl transferase (268 aa).

4 helical membrane passes run Trp-23–Ala-43, Phe-58–Tyr-78, Gly-96–Trp-116, and Gly-119–Phe-139. Arg-141 provides a ligand contact to a 1,2-diacyl-sn-glycero-3-phospho-(1'-sn-glycerol). The next 3 helical transmembrane spans lie at Ser-181–Val-201, Gly-206–Phe-226, and Ala-238–Val-258.

The protein belongs to the Lgt family.

The protein localises to the cell inner membrane. The enzyme catalyses L-cysteinyl-[prolipoprotein] + a 1,2-diacyl-sn-glycero-3-phospho-(1'-sn-glycerol) = an S-1,2-diacyl-sn-glyceryl-L-cysteinyl-[prolipoprotein] + sn-glycerol 1-phosphate + H(+). Its pathway is protein modification; lipoprotein biosynthesis (diacylglyceryl transfer). Functionally, catalyzes the transfer of the diacylglyceryl group from phosphatidylglycerol to the sulfhydryl group of the N-terminal cysteine of a prolipoprotein, the first step in the formation of mature lipoproteins. The protein is Phosphatidylglycerol--prolipoprotein diacylglyceryl transferase of Azospirillum brasilense.